A 130-amino-acid chain; its full sequence is Small ribosomal subunit protein uS9 (130 aa).

Belongs to the universal ribosomal protein uS9 family.

In Alkalilimnicola ehrlichii (strain ATCC BAA-1101 / DSM 17681 / MLHE-1), this protein is Small ribosomal subunit protein uS9.